A 558-amino-acid chain; its full sequence is MAKHVVFDEESRRALERGVNSLADAVRITLGPKGRNVVLEKKFGAPQIINDGVTIAKEVELEDPLENAGAQLMREVASKTNDVAGDGTTTATVLAQALIREGLKNVAAGANPVALRKGIDKTIDALVKEIEAKSKPVAGDAIAQVATISAGNDTEVGQMIAQAMDKVGKDGVITVEESKSLATEMEIVEGMQIDRGYISPYFVTDAERMVAEIENARLLIVNKKISSLQDLVGILEQVARAGQPLLIIAEDLEGEALATLVVNKLRGVLNVVAIKAPGFGERRQAMLQDIAVLTGGQVISEDVGLTLDKVDLEMLGTARKVTISKDNTTIVSEAANAGDVGKRVEQLRRQLDETDSEYDKEKLQERIAKLAGGVAVIKVGAATETELKDRKLRIEDALNATKAAVAEGIVPGGGTTLIHLTKTIESVKAQLKDEEKVGADLVGIALEAPLTQIADNAGKEGAVVVEKVRDADFSYGYNAMTDTYEDMIAAGVVDPAKVVRSGLQNAGSIAGMVLTTEALVVDKPEPAGAAAPDMGGMGGMGGMGGMGGMGGMGGMGMM.

Residues 29-32 (TLGP), 86-90 (DGTTT), glycine 413, and aspartate 494 each bind ATP.

It belongs to the chaperonin (HSP60) family. In terms of assembly, forms a cylinder of 14 subunits composed of two heptameric rings stacked back-to-back. Interacts with the co-chaperonin GroES.

It localises to the cytoplasm. The enzyme catalyses ATP + H2O + a folded polypeptide = ADP + phosphate + an unfolded polypeptide.. Together with its co-chaperonin GroES, plays an essential role in assisting protein folding. The GroEL-GroES system forms a nano-cage that allows encapsulation of the non-native substrate proteins and provides a physical environment optimized to promote and accelerate protein folding. The polypeptide is Chaperonin GroEL 1 (Acaryochloris marina (strain MBIC 11017)).